The sequence spans 212 residues: MPARLDARATRRYFDSAFNSPAVKILPNEYYVTNGEDVMLSTVLGSCVAACIHDPVIGVGGMNHFMLPEGDIHSPASATMRYGAFAMEVLINELLKAGAVRERLEAKVFGGGAVLSAMQLMNIGERNGQFVLNYLKTEGIPVRAQDLGDVHARRINYFPRDGRVMVRKMAPHHQKAEALIAQREAAAAQTVQAETRAAPRVERFARPGGMPV.

It belongs to the CheD family.

It catalyses the reaction L-glutaminyl-[protein] + H2O = L-glutamyl-[protein] + NH4(+). In terms of biological role, probably deamidates glutamine residues to glutamate on methyl-accepting chemotaxis receptors (MCPs), playing an important role in chemotaxis. The polypeptide is Probable chemoreceptor glutamine deamidase CheD (Bordetella parapertussis (strain 12822 / ATCC BAA-587 / NCTC 13253)).